Reading from the N-terminus, the 75-residue chain is Cytochrome c oxidase assembly factor 5 (75 aa).

Residues 28–66 (QTDCVLQEGKSPKECLKEGYCKALQVTFFECKRSILDTR) enclose the CHCH domain. Residues 31–42 (CVLQEGKSPKEC) carry the Cx10C motif motif. 2 disulfides stabilise this stretch: Cys31–Cys58 and Cys42–Cys48. Positions 48–58 (CKALQVTFFEC) match the Cx9C motif motif.

It belongs to the PET191 family.

Involved in an early step of the mitochondrial complex IV assembly process. The chain is Cytochrome c oxidase assembly factor 5 (coa5) from Xenopus tropicalis (Western clawed frog).